Reading from the N-terminus, the 122-residue chain is Large ribosomal subunit protein uL18 (122 aa).

This sequence belongs to the universal ribosomal protein uL18 family. In terms of assembly, part of the 50S ribosomal subunit; part of the 5S rRNA/L5/L18/L25 subcomplex. Contacts the 5S and 23S rRNAs.

Functionally, this is one of the proteins that bind and probably mediate the attachment of the 5S RNA into the large ribosomal subunit, where it forms part of the central protuberance. The sequence is that of Large ribosomal subunit protein uL18 from Petrotoga mobilis (strain DSM 10674 / SJ95).